Reading from the N-terminus, the 379-residue chain is MTTNQQNAVVSQPQTVVVKLGTSVLTGGTLALDRAHMVELARQCAELKKQGHSVVMVSSGAIAAGREHLGYPALPNEMASKQLLAAVGQSRLIQTWESLFGIYGIKIGQMLLTRADLDDRERFLNARDTINALVANDIIPIVNENDAVATSEIKVGDNDNLSALVGILCGADKLLLLTDQKGLFTADPRKDPNAELIKEVKTIDDTLRKIAGGSGTTLGTGGMATKLQAADIARRAGIEVIIAAGSAPNVIFDSLSTEPQGTRFLPCSEALENRKRWILAGPAASGDIIIDDGAVNAVVGKGSSLLAKGVIKVSGDFARGEVARVTNSHGKLVARGISAYSSEDLAKITGKHSKDIISILGHDYGSEVIHRDDLVVIQE.

K19 contributes to the ATP binding site. The substrate site is built by S59, D146, and N158. ATP-binding positions include 178 to 179 (TD) and 220 to 226 (TGGMATK). The 79-residue stretch at 285 to 363 (SGDIIIDDGA…KDIISILGHD (79 aa)) folds into the PUA domain.

This sequence belongs to the glutamate 5-kinase family.

Its subcellular location is the cytoplasm. It carries out the reaction L-glutamate + ATP = L-glutamyl 5-phosphate + ADP. It functions in the pathway amino-acid biosynthesis; L-proline biosynthesis; L-glutamate 5-semialdehyde from L-glutamate: step 1/2. Catalyzes the transfer of a phosphate group to glutamate to form L-glutamate 5-phosphate. The sequence is that of Glutamate 5-kinase from Vibrio parahaemolyticus serotype O3:K6 (strain RIMD 2210633).